Here is a 195-residue protein sequence, read N- to C-terminus: Imidazoleglycerol-phosphate dehydratase (195 aa).

Belongs to the imidazoleglycerol-phosphate dehydratase family.

Its subcellular location is the cytoplasm. The enzyme catalyses D-erythro-1-(imidazol-4-yl)glycerol 3-phosphate = 3-(imidazol-4-yl)-2-oxopropyl phosphate + H2O. The protein operates within amino-acid biosynthesis; L-histidine biosynthesis; L-histidine from 5-phospho-alpha-D-ribose 1-diphosphate: step 6/9. The sequence is that of Imidazoleglycerol-phosphate dehydratase from Methylorubrum extorquens (strain CM4 / NCIMB 13688) (Methylobacterium extorquens).